Reading from the N-terminus, the 66-residue chain is Myrmicitoxin(1)-Pr5a (66 aa).

A signal peptide spans 1 to 25 (MRSLYLSFSLTIIFVLVIMHAEAKA). A propeptide spanning residues 26–37 (ISEPNAIAEADP) is cleaved from the precursor. Val65 carries the post-translational modification Valine amide.

It belongs to the formicidae venom clade 3 family. As to expression, expressed by the venom gland.

It localises to the secreted. Its function is as follows. Toxin that causes a rapid and irreversible paralysis when intrathoracically injected into insects (blowflies). Does not cause spontaneous nocifensive behaviors by intraplantar injection in mice. Exhibits hemolytic and cytotoxic activities on HEK293 cells. This Pogonomyrmex rugosus (Desert harvester ant) protein is Myrmicitoxin(1)-Pr5a.